The chain runs to 476 residues: tRNA(Ile)-lysidine synthase (476 aa).

ATP is bound at residue S26–S31.

The protein belongs to the tRNA(Ile)-lysidine synthase family.

The protein localises to the cytoplasm. The enzyme catalyses cytidine(34) in tRNA(Ile2) + L-lysine + ATP = lysidine(34) in tRNA(Ile2) + AMP + diphosphate + H(+). In terms of biological role, ligates lysine onto the cytidine present at position 34 of the AUA codon-specific tRNA(Ile) that contains the anticodon CAU, in an ATP-dependent manner. Cytidine is converted to lysidine, thus changing the amino acid specificity of the tRNA from methionine to isoleucine. The chain is tRNA(Ile)-lysidine synthase from Bartonella quintana (strain Toulouse) (Rochalimaea quintana).